The chain runs to 258 residues: MALVDYGGSSSSASEDEDCTENIQTPALITLKRPALPKAATLLGPKKPKPEEFVEDVVDDPAEHGGRMRSFKHERGNWATYVYVPATACVDQLEEFQTEAIARLEPHLELQPNESLHLSLSRTVVLQYHQIDEFSRSLQSALNSSAGFAATLQGLRIYTNEERTRTFIAAPLDAAFVEKMTAILQPIDQVMLDYRLQQFYDPASFHVSLLWCVGDQETLLNEKLTELKELLDDQDKLCLAVNEVHLKCGNKDFTYSLK.

The interval 1–20 (MALVDYGGSSSSASEDEDCT) is disordered. The active-site Proton acceptor is the H117. AMP-binding positions include 117–119 (HLS), Y200, and 202–208 (PASFHVS). Residues Y200 and 204–208 (SFHVS) each bind UMP. The active-site Proton donor is H206.

It belongs to the 2H phosphoesterase superfamily. USB1 family.

It is found in the nucleus. The catalysed reaction is a 3'-end uridylyl-uridine-RNA = a 3'-end 2',3'-cyclophospho-uridine-RNA + uridine. Its function is as follows. 3'-5' RNA exonuclease that trims the 3' end of oligo(U) tracts of the pre-U6 small nuclear RNA (snRNA) molecule, leading to the formation of a mature U6 snRNA 3' end-terminated with a 2',3'-cyclic phosphate. Participates in the U6 snRNA 3' end processing that prevents U6 snRNA degradation. The protein is U6 snRNA phosphodiesterase 1 of Drosophila melanogaster (Fruit fly).